The following is a 220-amino-acid chain: MAYRDQPLGELALSIPRASALFRQYDMDYCCGGKQTLARAATRHDVDIDIIEAQLAQLAEQPIEKDWRAVPLADIIDHIVVRYHDRHREQLPELILQATKVERVHADKPNVPRGLTKYLTALHEELSSHMMKEEQILFPMIKQGMGRQATGPISVMESEHDEAGELVDVIKHVTQNVTPPPEACTTWKAMYNGINEMIDDLMEHISLENNVLFPRALAGE.

Belongs to the RIC family. YtfE subfamily. In terms of assembly, homodimer.

It localises to the cytoplasm. Di-iron-containing protein involved in the repair of iron-sulfur clusters damaged by oxidative and nitrosative stress conditions. This is Iron-sulfur cluster repair protein YtfE from Salmonella choleraesuis (strain SC-B67).